A 1370-amino-acid polypeptide reads, in one-letter code: DNA-directed RNA polymerase subunit beta (1370 aa).

The protein belongs to the RNA polymerase beta chain family. The RNAP catalytic core consists of 2 alpha, 1 beta, 1 beta' and 1 omega subunit. When a sigma factor is associated with the core the holoenzyme is formed, which can initiate transcription.

It catalyses the reaction RNA(n) + a ribonucleoside 5'-triphosphate = RNA(n+1) + diphosphate. Its function is as follows. DNA-dependent RNA polymerase catalyzes the transcription of DNA into RNA using the four ribonucleoside triphosphates as substrates. The chain is DNA-directed RNA polymerase subunit beta from Bordetella petrii (strain ATCC BAA-461 / DSM 12804 / CCUG 43448).